Here is a 484-residue protein sequence, read N- to C-terminus: MFQTESHPAGGSPLQSIRSSCDRCRLQKLKCTVQSMESDGRMVCERCVRAKVPCAFGRRRRASRPSDTKKQGDSSTRRSTAPRTTNPEPTVLTPPLSTTSSTSEQTLGGATPSPTLATSSALEAPLETLAECEPDTTAPTYSYHHHHHDSYQLGEGPPTPFPNPATTGGGSGSSMMDWDWLEQDFHANELYCLDPELLASAPASTSTSTGSPTAHHRALPDGGSGSSTMSMGGGADTPFSTTASVAGRRLPALIAEMQQRLEALENGAWLHDGAQSFDHYPIGAVLRLSQEFGALAGQVLGMAATYGGGGGVPPSDVAGLQMMAAVGGGGGLYELGRGGLAEGGSSTATVLLVLGGYVFLVRLYGLVLGHFHAHLNRIPSGSLGGHMHSTPAPTTSPTLQLGELPSGGAMPDVSRIHAALGMLLAALHSVEEQLGQGGEVAREMVVSILTQGSGLEPAKLQDGFGDLGEKVRSVKELLREKMGL.

A DNA-binding region (zn(2)-C6 fungal-type) is located at residues Cys-21–Cys-54. Disordered stretches follow at residues Arg-59–Ala-117, Thr-136–Ser-174, Pro-202–Thr-242, and His-386–Ser-406. The segment covering Arg-64–Thr-76 has biased composition (basic and acidic residues). A compositionally biased stretch (low complexity) spans Arg-77–Leu-107. Residues Pro-202 to Thr-213 show a composition bias toward low complexity.

Its subcellular location is the nucleus. In terms of biological role, transcription factor that regulates the expression of the gene cluster that mediates the biosynthesis of the tetramic acid Sch210972, a potential anti-HIV fungal natural product that contains a decalin core. The polypeptide is Transcription factor cghD (Chaetomium globosum (strain ATCC 6205 / CBS 148.51 / DSM 1962 / NBRC 6347 / NRRL 1970) (Soil fungus)).